The sequence spans 592 residues: Arginine--tRNA ligase (592 aa).

The 'HIGH' region motif lies at 123 to 133 (PNTNKPLHLGH).

This sequence belongs to the class-I aminoacyl-tRNA synthetase family. As to quaternary structure, monomer.

Its subcellular location is the cytoplasm. The catalysed reaction is tRNA(Arg) + L-arginine + ATP = L-arginyl-tRNA(Arg) + AMP + diphosphate. The chain is Arginine--tRNA ligase from Flavobacterium johnsoniae (strain ATCC 17061 / DSM 2064 / JCM 8514 / BCRC 14874 / CCUG 350202 / NBRC 14942 / NCIMB 11054 / UW101) (Cytophaga johnsonae).